The primary structure comprises 396 residues: Ornithine aminotransferase 2 (396 aa).

Lysine 255 carries the N6-(pyridoxal phosphate)lysine modification.

This sequence belongs to the class-III pyridoxal-phosphate-dependent aminotransferase family. OAT subfamily. Pyridoxal 5'-phosphate is required as a cofactor.

Its subcellular location is the cytoplasm. It catalyses the reaction a 2-oxocarboxylate + L-ornithine = L-glutamate 5-semialdehyde + an L-alpha-amino acid. Its pathway is amino-acid biosynthesis; L-proline biosynthesis; L-glutamate 5-semialdehyde from L-ornithine: step 1/1. Functionally, catalyzes the interconversion of ornithine to glutamate semialdehyde. This Staphylococcus saprophyticus subsp. saprophyticus (strain ATCC 15305 / DSM 20229 / NCIMB 8711 / NCTC 7292 / S-41) protein is Ornithine aminotransferase 2.